Here is a 407-residue protein sequence, read N- to C-terminus: Peptidase T (407 aa).

Residue histidine 81 coordinates Zn(2+). Aspartate 83 is a catalytic residue. Aspartate 142 contacts Zn(2+). Residue glutamate 176 is the Proton acceptor of the active site. Residues glutamate 177, aspartate 199, and histidine 381 each coordinate Zn(2+).

It belongs to the peptidase M20B family. The cofactor is Zn(2+).

It localises to the cytoplasm. It carries out the reaction Release of the N-terminal residue from a tripeptide.. Functionally, cleaves the N-terminal amino acid of tripeptides. The sequence is that of Peptidase T from Streptococcus pneumoniae (strain JJA).